A 299-amino-acid polypeptide reads, in one-letter code: MAEEQAYHVNKGLECIKALRARPLDPLVVEEALAAWVETSEGQTLDRMSSDEAEADHQDISKPCFPAAGPGKSSMSRCHDQGLRGSNSCDEELGAFIGDSSMHSTEVQHYHVYDHSGEKVEGVEDADSILVQSGADDGVEVWGGDEESENSDVDSGEPDPEGSAPADWGSSPISPATRASDVETVEGDEIQKLLEDQSRIRKMTKAGKTLVVPPIPSQERPTASEKPIKKGHRREIDLIWNDGRVFIDRWCNPTCSKVTVGTVRAKCICGECPRVCEQCITDSGIENRIWYHNLADIPE.

Disordered stretches follow at residues 56-79 (DHQD…SRCH), 137-186 (DGVE…ETVE), and 205-229 (KAGK…KPIK). Residues 137-160 (DGVEVWGGDEESENSDVDSGEPDP) are compositionally biased toward acidic residues. Residues H232, C251, C255, C267, C269, C272, C276, and C279 each coordinate Zn(2+).

This sequence belongs to the paramyxoviruses V protein family. As to quaternary structure, interacts with host IFIH1/MDA5 and DHX58/LGP2. Interacts with host TYK2; this interaction inhibits the type I interferon signaling pathway.

It is found in the host cytoplasm. Plays an essential role in the inhibition of host immune response. Prevents the establishment of cellular antiviral state by blocking interferon-alpha/beta (IFN-alpha/beta) production and signaling pathway. Interacts with host IFIH1/MDA5 and DHX58/LGP2 to inhibit the transduction pathway involved in the activation of IFN-beta promoter, thus protecting the virus against cell antiviral state. Blocks the type I interferon signaling pathway by interacting with host TYK2 and thereby inhibiting downstream STAT1 and STAT2 phosphorylation. This Bos indicus (Zebu) protein is Non-structural protein V (P/V).